Consider the following 81-residue polypeptide: MKLTCVMIVAVLFLTAWTFVTADDSKNGLENHFWKARDEMKNREASKLDKKEACYAPGTFCGIKPGLCCSEFCLPGVCFGG.

Residues 1–22 (MKLTCVMIVAVLFLTAWTFVTA) form the signal peptide. Positions 23-49 (DDSKNGLENHFWKARDEMKNREASKLD) are excised as a propeptide. Disulfide bonds link Cys-54–Cys-69, Cys-61–Cys-73, and Cys-68–Cys-78. 4-hydroxyproline occurs at positions 57 and 65. A Glycine amide; in form delta-conotoxin PVIA modification is found at Gly-80.

Post-translationally, the difference between delta-conotoxin PVIA and [deamido]-delta-conotoxin PVIA lies in the state of amidation of Gly-80. In terms of tissue distribution, expressed by the venom duct.

Its subcellular location is the secreted. Delta-conotoxins bind to site 6 of voltage-gated sodium channels (Nav) and inhibit the inactivation process. This toxin shows weak effects on rNav1.2/SCN2A (EC(50)=2.9 uM), rNav1.4/SCN4A (EC(50)=5.2 uM), hNav1.7/SCN9A (EC(50)=1.9 uM) and rNav1.7/SCN9A (EC(50)=6.4 uM). In vivo, this toxin shows different effects. In mice, injection of this toxin causes hyperactivity, rapid running, limb extension, and death. In fish, the peptide elicites spurts of rapid swimming, with twisted motions, quivering fins and the lockjaw extended mouth syndrome. Rigid paralysis and death are observed at higher doses. In mollusks, this peptide is inactive. Injection of this peptide together with the kappa-conotoxin PVIIA causes the sudden tetanus of prey (STOP) syndrome, which is a single, lethal 'fin-pop' in envenomed fish. The chain is Delta-conotoxin PVIA from Conus purpurascens (Purple cone).